Reading from the N-terminus, the 95-residue chain is Beta-alanine degradation protein BauB (95 aa).

Residues 23–90 (WRFAPGAETG…NASAHEVVFV (68 aa)) form the Cupin type-2 domain.

Involved in the degradation of beta-alanine. The chain is Beta-alanine degradation protein BauB (bauB) from Pseudomonas aeruginosa (strain ATCC 15692 / DSM 22644 / CIP 104116 / JCM 14847 / LMG 12228 / 1C / PRS 101 / PAO1).